Consider the following 451-residue polypeptide: Secreted RxLR effector protein 111 (451 aa).

Positions 1–19 (MRGTLATALLLVASCRIAA) are cleaved as a signal peptide. Residues 48–69 (RFLRDNREQRVALALTAANESR) carry the RxLR-dEER motif. N-linked (GlcNAc...) asparagine glycosylation occurs at Asn66. 2 stretches are compositionally biased toward polar residues: residues 175-184 (RKTLSKTQFK) and 413-426 (SPASQSRSNNQRTG). Disordered stretches follow at residues 175 to 194 (RKTLSKTQFKNPAASKSTKR) and 404 to 451 (IPLQ…NKHA). The segment covering 437–451 (PERDSFRHIESNKHA) has biased composition (basic and acidic residues).

Belongs to the RxLR effector family.

It is found in the secreted. The protein localises to the host nucleus. In terms of biological role, secreted effector that acts as an elicitor that induces cell death in host plant cells. The polypeptide is Secreted RxLR effector protein 111 (Plasmopara viticola (Downy mildew of grapevine)).